The chain runs to 451 residues: Lysine histidine transporter-like 3 (451 aa).

Over 1–40 (MKGIPSSSNQILNQDLVEDQSFELEDWLPITASRNANWYY) the chain is Cytoplasmic. A helical membrane pass occupies residues 41 to 61 (SAFHNVTAIVGAGVLGLPYAM). Topologically, residues 62–63 (SE) are extracellular. Residues 64 to 84 (LGWGPGVVVLILSWVITLYTF) traverse the membrane as a helical segment. Topologically, residues 85-115 (WQMIEMHEMFEGKRFDRYHELGQAAFGKKLG) are cytoplasmic. A helical transmembrane segment spans residues 116–136 (LYIVVPLQLLVETSACIVYMV). At 137 to 159 (TGGESLKKIHQLSVGDYECRKLK) the chain is on the extracellular side. The chain crosses the membrane as a helical span at residues 160-177 (VRHFILIFASSQFVLSLL). Over 178-182 (KNFNS) the chain is Cytoplasmic. Residues 183-203 (ISGVSLVAAVMSMSYSTIAWV) traverse the membrane as a helical segment. Over 204–227 (ASLTKGVANNVEYGYKRRNNTSVP) the chain is Extracellular. A helical transmembrane segment spans residues 228–248 (LAFLGALGEMAFAYAGHNVVL). Residues 249-269 (EIQATIPSTPENPSKRPMWKG) lie on the Cytoplasmic side of the membrane. A helical transmembrane segment spans residues 270 to 290 (AIVAYIIVAFCYFPVALVGFW). Over 291–309 (TFGNNVEENILKTLRGPKG) the chain is Extracellular. The chain crosses the membrane as a helical span at residues 310-330 (LIIVANIFVIIHLMGSYQVYA). Residues 331–358 (MPVFDMIESVMIKKWHFSPTRVLRFTIR) lie on the Cytoplasmic side of the membrane. Residues 359–379 (WTFVAATMGIAVALPHFSALL) form a helical membrane-spanning segment. Residue Ser380 is a topological domain, extracellular. Residues 381 to 401 (FFGGFIFAPTTYFIPCIIWLI) form a helical membrane-spanning segment. Topologically, residues 402-413 (LKKPKRFSLSWC) are cytoplasmic. Residues 414-434 (INWICIILGVLVMIIAPIGGL) form a helical membrane-spanning segment. The Extracellular portion of the chain corresponds to 435–451 (AKLMNALKQPDSSCKST).

The protein belongs to the amino acid/polyamine transporter 2 family. Amino acid/auxin permease (AAAP) (TC 2.A.18.2) subfamily.

The protein resides in the cell membrane. Functionally, amino acid transporter. The chain is Lysine histidine transporter-like 3 from Arabidopsis thaliana (Mouse-ear cress).